The chain runs to 104 residues: N(4)-acetylcytidine amidohydrolase (104 aa).

One can recognise an ASCH domain in the interval 6–94; the sequence is ITFFQRFQND…IAEIYPNQTQ (89 aa). Residue K21 is the Proton acceptor of the active site. T24 serves as the catalytic Nucleophile. Catalysis depends on E74, which acts as the Proton donor.

The protein belongs to the N(4)-acetylcytidine amidohydrolase family.

The catalysed reaction is N(4)-acetylcytidine + H2O = cytidine + acetate + H(+). The enzyme catalyses N(4)-acetyl-2'-deoxycytidine + H2O = 2'-deoxycytidine + acetate + H(+). It carries out the reaction N(4)-acetylcytosine + H2O = cytosine + acetate + H(+). Its function is as follows. Catalyzes the hydrolysis of N(4)-acetylcytidine (ac4C). This chain is N(4)-acetylcytidine amidohydrolase (yqfB), found in Salmonella agona (strain SL483).